We begin with the raw amino-acid sequence, 75 residues long: Lipid-anchored plasma membrane protein CPP2 (75 aa).

The segment at 1–43 is disordered; the sequence is MSQQQGYYQQGPPQQGYYQQGPPQQGYYQQGPPQQGYPQQQPV. Repeat copies occupy residues 4–13, 14–23, and 24–33. The segment at 4-33 is 3 X 10 AA tandem repeats of Q-Q-G-Y-Y-Q-Q-G-P-P; the sequence is QQGYYQQGPPQQGYYQQGPPQQGYYQQGPP.

The protein belongs to the CYSTM1 family. Palmitoylated near the C-terminus.

The protein localises to the cell membrane. This is Lipid-anchored plasma membrane protein CPP2 from Saccharomyces cerevisiae (strain ATCC 204508 / S288c) (Baker's yeast).